A 147-amino-acid chain; its full sequence is uncharacterized protein (147 aa).

A run of 2 helical transmembrane segments spans residues L21 to V41 and A67 to L87.

The protein resides in the cell membrane. This is an uncharacterized protein from Ureaplasma parvum serovar 3 (strain ATCC 700970).